Here is a 514-residue protein sequence, read N- to C-terminus: Peptide chain release factor 3 (514 aa).

The region spanning 8 to 268 (KKRRTFAIIS…TFLEFAPEPH (261 aa)) is the tr-type G domain. GTP is bound by residues 17–24 (SHPDAGKT), 85–89 (DTPGH), and 139–142 (NKLD).

This sequence belongs to the TRAFAC class translation factor GTPase superfamily. Classic translation factor GTPase family. PrfC subfamily.

The protein resides in the cytoplasm. Its function is as follows. Increases the formation of ribosomal termination complexes and stimulates activities of RF-1 and RF-2. It binds guanine nucleotides and has strong preference for UGA stop codons. It may interact directly with the ribosome. The stimulation of RF-1 and RF-2 is significantly reduced by GTP and GDP, but not by GMP. The sequence is that of Peptide chain release factor 3 from Streptococcus pyogenes serotype M49 (strain NZ131).